Here is a 400-residue protein sequence, read N- to C-terminus: Protein TFG (400 aa).

M1 carries the N-acetylmethionine modification. The PB1 domain maps to 10–91 (KLIIKAQLGE…RILKLTLFVN (82 aa)). S50 carries the post-translational modification Phosphoserine. The stretch at 97–124 (LESSQVKYLRRELIELRNKVNRLLDSLE) forms a coiled coil. 2 disordered regions span residues 120-160 (LDSL…STQV) and 187-400 (LTDD…PGYR). A compositionally biased stretch (polar residues) spans 150–160 (SDSSGKQSTQV). S197 is subject to Phosphoserine. Composition is skewed to low complexity over residues 237–258 (GQIE…AQQP), 265–298 (PQQY…PTSQ), and 307–327 (QPQQ…YPAQ). Residues 328–340 (TYTAQTSQPTNYT) are compositionally biased toward polar residues. An omega-N-methylarginine mark is found at R385 and R400.

In terms of assembly, self-associates to form an oligomeric complex. Interacts with PDCD6; promoting localization and polymerization of TFG at endoplasmic reticulum exit site. Interacts with SEC16B. Ubiquitous.

Its subcellular location is the endoplasmic reticulum. Its function is as follows. Plays a role in the normal dynamic function of the endoplasmic reticulum (ER) and its associated microtubules. Required for secretory cargo traffic from the endoplasmic reticulum to the Golgi apparatus. The protein is Protein TFG (TFG) of Homo sapiens (Human).